Consider the following 243-residue polypeptide: DNA repair protein RecO (243 aa).

The protein belongs to the RecO family.

In terms of biological role, involved in DNA repair and RecF pathway recombination. This chain is DNA repair protein RecO, found in Caulobacter sp. (strain K31).